A 35-amino-acid chain; its full sequence is Probable L,D-transpeptidase ErfK/SrfK (35 aa).

A signal peptide spans 1–21; that stretch reads MRRVKLLCTALMLLASHGALA.

It belongs to the YkuD family.

It is found in the periplasm. It functions in the pathway cell wall biogenesis; peptidoglycan biosynthesis. The sequence is that of Probable L,D-transpeptidase ErfK/SrfK (erfK) from Klebsiella aerogenes (Enterobacter aerogenes).